A 338-amino-acid polypeptide reads, in one-letter code: Aspartate carbamoyltransferase catalytic subunit (338 aa).

Residues R72 and T73 each contribute to the carbamoyl phosphate site. Position 100 (K100) interacts with L-aspartate. R122, H152, and Q155 together coordinate carbamoyl phosphate. L-aspartate contacts are provided by R186 and R243. G284 and P285 together coordinate carbamoyl phosphate.

Belongs to the aspartate/ornithine carbamoyltransferase superfamily. ATCase family. In terms of assembly, heterododecamer (2C3:3R2) of six catalytic PyrB chains organized as two trimers (C3), and six regulatory PyrI chains organized as three dimers (R2).

It carries out the reaction carbamoyl phosphate + L-aspartate = N-carbamoyl-L-aspartate + phosphate + H(+). It functions in the pathway pyrimidine metabolism; UMP biosynthesis via de novo pathway; (S)-dihydroorotate from bicarbonate: step 2/3. Functionally, catalyzes the condensation of carbamoyl phosphate and aspartate to form carbamoyl aspartate and inorganic phosphate, the committed step in the de novo pyrimidine nucleotide biosynthesis pathway. The sequence is that of Aspartate carbamoyltransferase catalytic subunit from Acinetobacter baumannii (strain AB307-0294).